The chain runs to 122 residues: MIQPQTHLNVADNSGARELMCIRIIGASNRRYAHIGDVIVAVIKEAVPNMPLERSEVIRAVIVRTCKELKRDNGMIIRYDDNAAVVIDQEGNPKGTRVFGAIARELRKLNFTKIVSLAPEVL.

The protein belongs to the universal ribosomal protein uL14 family. As to quaternary structure, part of the 50S ribosomal subunit.

Its subcellular location is the plastid. The protein localises to the chloroplast. Binds to 23S rRNA. The sequence is that of Large ribosomal subunit protein uL14c from Calycanthus floridus var. glaucus (Eastern sweetshrub).